A 785-amino-acid polypeptide reads, in one-letter code: Phenylalanine--tRNA ligase beta subunit (785 aa).

One can recognise a tRNA-binding domain in the interval 38-150 (CEHLKTFVIA…NTYNVGDTFF (113 aa)). The B5 domain occupies 394-470 (VDNIELNFFP…RLYGYDKICE (77 aa)). Residues Asp448, Asp454, Glu457, and Glu458 each contribute to the Mg(2+) site. In terms of domain architecture, FDX-ACB spans 690-783 (SCYQSVKRDF…VAEKLGGVLR (94 aa)).

This sequence belongs to the phenylalanyl-tRNA synthetase beta subunit family. Type 1 subfamily. Tetramer of two alpha and two beta subunits. Mg(2+) serves as cofactor.

It is found in the cytoplasm. The enzyme catalyses tRNA(Phe) + L-phenylalanine + ATP = L-phenylalanyl-tRNA(Phe) + AMP + diphosphate + H(+). The chain is Phenylalanine--tRNA ligase beta subunit from Ehrlichia canis (strain Jake).